The primary structure comprises 241 residues: tRNA pseudouridine synthase A (241 aa).

The active-site Nucleophile is Asp-52. Tyr-110 is a binding site for substrate.

Belongs to the tRNA pseudouridine synthase TruA family. As to quaternary structure, homodimer.

The catalysed reaction is uridine(38/39/40) in tRNA = pseudouridine(38/39/40) in tRNA. Its function is as follows. Formation of pseudouridine at positions 38, 39 and 40 in the anticodon stem and loop of transfer RNAs. This is tRNA pseudouridine synthase A from Aquifex aeolicus (strain VF5).